We begin with the raw amino-acid sequence, 217 residues long: Adapter protein MecA (217 aa).

Belongs to the MecA family. In terms of assembly, homodimer.

Functionally, enables the recognition and targeting of unfolded and aggregated proteins to the ClpC protease or to other proteins involved in proteolysis. Acts negatively in the development of competence by binding ComK and recruiting it to the ClpCP protease. When overexpressed, inhibits sporulation. Also involved in Spx degradation by ClpC. This is Adapter protein MecA from Alkalihalophilus pseudofirmus (strain ATCC BAA-2126 / JCM 17055 / OF4) (Bacillus pseudofirmus).